The following is a 329-amino-acid chain: MSSLRLRLKYENQSAVETVEANATVGSFLDLVAAKFSLPRNSIALKFGFPPQDIPLVNSDVPLSTLVSSGQQILVLKNAATSFSTNEPAKPPIPNAATKPTFPPQTEISNPPAVSHQSKNTSQDPPYVSTPIGDIALRVMPDDNSCLFRALSKPLGFSPYELREIVANQVLSNPDIYSTAILGKPSIEYASWIRKETSWGGYIELSILSSHFGVEICSVDVKTGRVDSYNPQPATGQRTYIVYSGIHYDLAALAAVLWDTDVDVVLFDASDVTITPYVQQLASLLKNMHYYTDTASFSIRCTICGTGLVGEKDATAHALATGHTQFGEY.

Residues 7–89 (RLKYENQSAV…ATSFSTNEPA (83 aa)) are UBX-like. Residues 85–127 (TNEPAKPPIPNAATKPTFPPQTEISNPPAVSHQSKNTSQDPPY) form a disordered region. Residues 115–124 (SHQSKNTSQD) are compositionally biased toward polar residues. An OTU domain is found at 135 to 254 (IALRVMPDDN…GIHYDLAALA (120 aa)). Residues 140–146 (MPDDNSC) are cys-loop. The active site involves D143. C146 acts as the Nucleophile in catalysis. The tract at residues 193–203 (IRKETSWGGYI) is variable-loop. Residues 243–247 (YSGIH) form a his-loop region. I246 lines the substrate pocket. H247 is a catalytic residue. Residues 272–277 (VTITPY) are S2 site. The segment at 299-323 (IRCTICGTGLVGEKDATAHALATGH) adopts a C2H2-type zinc-finger fold. H323 is an active-site residue.

The protein localises to the cytoplasm. It is found in the nucleus. The catalysed reaction is Thiol-dependent hydrolysis of ester, thioester, amide, peptide and isopeptide bonds formed by the C-terminal Gly of ubiquitin (a 76-residue protein attached to proteins as an intracellular targeting signal).. Functionally, hydrolase that can remove conjugated ubiquitin from proteins and may therefore play an important regulatory role at the level of protein turnover by preventing degradation. Has a role in meiosis. This Schizosaccharomyces pombe (strain 972 / ATCC 24843) (Fission yeast) protein is Putative ubiquitin thioesterase otu1 (otu1).